Consider the following 513-residue polypeptide: TRAF3-interacting JNK-activating modulator (513 aa).

3 disordered regions span residues 1–96 (MISS…GQVS), 130–171 (SSGI…KAEE), and 381–402 (SLQG…QLKK). Over 1-485 (MISSDSRSSP…QLQVKENELQ (485 aa)) the chain is Cytoplasmic. Basic and acidic residues-rich tracts occupy residues 17-31 (ESYE…ETRE) and 69-79 (RNLEEEKKGQA). The stretch at 266-488 (MKKVLLEMED…VKENELQCGQ (223 aa)) forms a coiled coil. Residues 386–397 (GEQQSSETQDLQ) show a composition bias toward polar residues. Residues 486-506 (CGQWLPVLMVVIATALAVFLA) form a helical; Anchor for type IV membrane protein membrane-spanning segment. At 507 to 513 (NKGNLVI) the chain is on the extracellular side.

Interacts (via its coiled-coil domain) with TRAF3 (via isoleucine zipper). Interacts with MAP2K1. Interacts with PPP2CA; this interaction targets PPP2CA to the lysosomes. Interacts with MAVS. Interacts with TBK1. Expressed in bone marrow, spleen and thymus. Not detected in heart, kidney and liver.

The protein resides in the cell membrane. It localises to the golgi apparatus membrane. Its subcellular location is the lysosome membrane. It is found in the mitochondrion outer membrane. Adapter protein that plays essential roles in both innate and adaptive immunity. Plays a crucial role in the regulation of thymocyte development. Mechanistically, mediates TCR-stimulated activation through recruiting MAP2K1/MEK1 to the Golgi and, thereby, facilitating the interaction of MAP2K1/MEK1 with its activator BRAF. Also plays an essential role in regulatory T-cell stability and function by recruiting the serine-threonine phosphatase catalytic subunit (PPP2CA) to the lysosome, thereby facilitating the interaction of PP2Ac with the mTORC1 component RPTOR and restricting glycolytic metabolism. Positively regulates TLR4 signaling activity in macrophage-mediated inflammation by acting as a molecular clamp to facilitate LPS-induced translocation of TLR4 to lipid rafts. In response to viral infection, facilitates the recruitment of TRAF3 to MAVS within mitochondria leading to IRF3 activation and interferon production. However, participates in the maintenance of immune homeostasis and the prevention of overzealous innate immunity by promoting 'Lys-48'-dependent ubiquitination of TBK1. This is TRAF3-interacting JNK-activating modulator (Traf3ip3) from Mus musculus (Mouse).